We begin with the raw amino-acid sequence, 238 residues long: Ribonuclease PH (238 aa).

Phosphate-binding positions include arginine 86 and 124-126; that span reads GTR.

This sequence belongs to the RNase PH family. Homohexameric ring arranged as a trimer of dimers.

The catalysed reaction is tRNA(n+1) + phosphate = tRNA(n) + a ribonucleoside 5'-diphosphate. Phosphorolytic 3'-5' exoribonuclease that plays an important role in tRNA 3'-end maturation. Removes nucleotide residues following the 3'-CCA terminus of tRNAs; can also add nucleotides to the ends of RNA molecules by using nucleoside diphosphates as substrates, but this may not be physiologically important. Probably plays a role in initiation of 16S rRNA degradation (leading to ribosome degradation) during starvation. The chain is Ribonuclease PH from Caulobacter vibrioides (strain ATCC 19089 / CIP 103742 / CB 15) (Caulobacter crescentus).